The sequence spans 453 residues: Trypanin (453 aa).

Positions 1–10 (MPPRTAAERG) are enriched in basic and acidic residues. The interval 1-22 (MPPRTAAERGGRRKSVKAPPPV) is disordered. Coiled-coil stretches lie at residues 60 to 156 (TITK…EMNV) and 185 to 377 (SCEA…LVEE).

This sequence belongs to the DRC4 family.

It is found in the cytoplasm. The protein localises to the cytoskeleton. It localises to the cell projection. Its subcellular location is the cilium. The protein resides in the flagellum. Cytoskeletal linker that plays a central role in the flagellum cell motility. Required for directional cell motility. Plays a role as part of a dynein regulatory system that regulates flagellar beat in response to signals from the central pair apparatus and radial spokes in procyclic cells. Also plays an essential role in the bloodstream form of the trypanosomes as its silencing is lethal for the circulating form. In Trypanosoma brucei rhodesiense, this protein is Trypanin.